The sequence spans 164 residues: Lipoprotein signal peptidase (164 aa).

The next 3 helical transmembrane spans lie at 12–32 (WLWLVVVVLIIDLGSKYLILQ), 70–90 (WFFAGIAIGISVILVVMMYRS), and 102–122 (ALIIGGALGNLFDRLWHGFVV). Catalysis depends on residues aspartate 123 and aspartate 141. The chain crosses the membrane as a helical span at residues 137–157 (FNLADTAICVGAALIVLEGFL).

This sequence belongs to the peptidase A8 family.

It is found in the cell inner membrane. It catalyses the reaction Release of signal peptides from bacterial membrane prolipoproteins. Hydrolyzes -Xaa-Yaa-Zaa-|-(S,diacylglyceryl)Cys-, in which Xaa is hydrophobic (preferably Leu), and Yaa (Ala or Ser) and Zaa (Gly or Ala) have small, neutral side chains.. Its pathway is protein modification; lipoprotein biosynthesis (signal peptide cleavage). This protein specifically catalyzes the removal of signal peptides from prolipoproteins. This is Lipoprotein signal peptidase from Escherichia coli O6:K15:H31 (strain 536 / UPEC).